The sequence spans 162 residues: uncharacterized protein (162 aa).

Belongs to the A.longa ORF167/ORF288 family.

It is found in the plastid. This is an uncharacterized protein from Euglena longa (Euglenophycean alga).